Here is a 197-residue protein sequence, read N- to C-terminus: Large ribosomal subunit protein eL15 (197 aa).

3 stretches are compositionally biased toward basic residues: residues 70-90, 163-179, and 187-197; these read PKGG…RMGK, RGKT…RKRG, and PSLRAHRRRGK. 2 disordered regions span residues 70-99 and 163-197; these read PKGG…GKSK and RGKT…RRGK.

It belongs to the eukaryotic ribosomal protein eL15 family.

This chain is Large ribosomal subunit protein eL15, found in Methanopyrus kandleri (strain AV19 / DSM 6324 / JCM 9639 / NBRC 100938).